A 383-amino-acid polypeptide reads, in one-letter code: Succinyl-diaminopimelate desuccinylase (383 aa).

H73 serves as a coordination point for Zn(2+). The active site involves D75. Position 107 (D107) interacts with Zn(2+). E141 functions as the Proton acceptor in the catalytic mechanism. Residues E142, E170, and H356 each contribute to the Zn(2+) site.

The protein belongs to the peptidase M20A family. DapE subfamily. As to quaternary structure, homodimer. Zn(2+) serves as cofactor. Requires Co(2+) as cofactor.

The catalysed reaction is N-succinyl-(2S,6S)-2,6-diaminopimelate + H2O = (2S,6S)-2,6-diaminopimelate + succinate. The protein operates within amino-acid biosynthesis; L-lysine biosynthesis via DAP pathway; LL-2,6-diaminopimelate from (S)-tetrahydrodipicolinate (succinylase route): step 3/3. Catalyzes the hydrolysis of N-succinyl-L,L-diaminopimelic acid (SDAP), forming succinate and LL-2,6-diaminopimelate (DAP), an intermediate involved in the bacterial biosynthesis of lysine and meso-diaminopimelic acid, an essential component of bacterial cell walls. The polypeptide is Succinyl-diaminopimelate desuccinylase (Pseudomonas paraeruginosa (strain DSM 24068 / PA7) (Pseudomonas aeruginosa (strain PA7))).